A 235-amino-acid chain; its full sequence is Small ribosomal subunit protein uS3 (235 aa).

Residues 39–107 (VRKFLNKELA…PAQINIAEVK (69 aa)) form the KH type-2 domain.

Belongs to the universal ribosomal protein uS3 family. Part of the 30S ribosomal subunit. Forms a tight complex with proteins S10 and S14.

Its function is as follows. Binds the lower part of the 30S subunit head. Binds mRNA in the 70S ribosome, positioning it for translation. The chain is Small ribosomal subunit protein uS3 from Mannheimia succiniciproducens (strain KCTC 0769BP / MBEL55E).